Here is a 1038-residue protein sequence, read N- to C-terminus: Bone morphogenetic protein receptor type-2 (1038 aa).

Positions 1–26 (MTSSLQRPWRVPWLPWTILLVSTAAA) are cleaved as a signal peptide. At 27 to 150 (SQNQERLCAF…PPHSFNRDET (124 aa)) the chain is on the extracellular side. Intrachain disulfides connect cysteine 34–cysteine 66, cysteine 60–cysteine 84, cysteine 94–cysteine 117, cysteine 99–cysteine 116, and cysteine 118–cysteine 123. N-linked (GlcNAc...) asparagine glycosylation is present at asparagine 55. A glycan (N-linked (GlcNAc...) asparagine) is linked at asparagine 110. Asparagine 126 carries an N-linked (GlcNAc...) asparagine glycan. The chain crosses the membrane as a helical span at residues 151-171 (IIIALASVSVLAVLIVALCFG). Residues 172 to 1038 (YRMLTGDRKQ…VSKDIGMNCL (867 aa)) are Cytoplasmic-facing. The 302-residue stretch at 203–504 (LKLLELIGRG…QCAEERMAEL (302 aa)) folds into the Protein kinase domain. ATP contacts are provided by residues 209 to 217 (IGRGRYGAV), lysine 230, and 280 to 282 (EYY). The active-site Proton acceptor is the aspartate 333. ATP contacts are provided by residues 337–338 (RN) and aspartate 351. Threonine 379 is subject to Phosphothreonine. Serine 586 bears the Phosphoserine mark. A disordered region spans residues 593–626 (QAQARIPSPETSVTSLSTNTTTTNTTGLTPSTGM). Low complexity predominate over residues 603-626 (TSVTSLSTNTTTTNTTGLTPSTGM). 2 positions are modified to phosphoserine: serine 680 and serine 681. 2 disordered regions span residues 746 to 770 (PKQQNLPKRPTSLPLNTKNSTKEPR) and 872 to 972 (RREQ…EKIK). The segment covering 872-896 (RREQQAGHDEGVLDRLVDRRERPLE) has biased composition (basic and acidic residues). The segment covering 937-964 (RPNSLDLSATNVLDGSSIQIGESTQDGK) has biased composition (polar residues).

Belongs to the protein kinase superfamily. TKL Ser/Thr protein kinase family. TGFB receptor subfamily. In terms of assembly, interacts with GDF5. Interacts with BMP4. Interacts with SCUBE3. Interacts with TSC22D1/TSC-22. Interacts with activin A/INHBA. Mg(2+) is required as a cofactor. The cofactor is Mn(2+). In terms of tissue distribution, highly expressed in heart and liver.

The protein localises to the cell membrane. It carries out the reaction L-threonyl-[receptor-protein] + ATP = O-phospho-L-threonyl-[receptor-protein] + ADP + H(+). The catalysed reaction is L-seryl-[receptor-protein] + ATP = O-phospho-L-seryl-[receptor-protein] + ADP + H(+). Functionally, on ligand binding, forms a receptor complex consisting of two type II and two type I transmembrane serine/threonine kinases. Type II receptors phosphorylate and activate type I receptors which autophosphorylate, then bind and activate SMAD transcriptional regulators. Can also mediate signaling through the activation of the p38MAPK cascade. Binds to BMP7, BMP2 and, less efficiently, BMP4. Binding is weak but enhanced by the presence of type I receptors for BMPs. Mediates induction of adipogenesis by GDF6. Promotes signaling also by binding to activin A/INHBA. In Homo sapiens (Human), this protein is Bone morphogenetic protein receptor type-2 (BMPR2).